A 1028-amino-acid polypeptide reads, in one-letter code: Contactin-6 (1028 aa).

The first 19 residues, 1–19 (MRLLWKLVILLPLINSCAG), serve as a signal peptide directing secretion. 6 Ig-like C2-type domains span residues 32–117 (PQDV…AKLQ), 122–208 (EDFE…RSVQ), 227–308 (PKIE…RNLA), 318–402 (PEWE…AELR), 408–495 (PDFS…GSLI), and 499–587 (RTVI…ERLS). Intrachain disulfides connect Cys50–Cys100, Cys144–Cys196, Cys249–Cys297, Cys339–Cys386, Cys431–Cys479, and Cys521–Cys577. 2 N-linked (GlcNAc...) asparagine glycosylation sites follow: Asn65 and Asn193. Asn368, Asn377, and Asn468 each carry an N-linked (GlcNAc...) asparagine glycan. Fibronectin type-III domains lie at 600–698 (PPED…TKAS), 703–800 (APVN…SGED), 805–901 (APRG…TKKS), and 902–996 (PPSQ…KMSS). 4 N-linked (GlcNAc...) asparagine glycosylation sites follow: Asn659, Asn765, Asn860, and Asn865. Tyr882 bears the Phosphotyrosine mark. Residues 887-902 (TGPSSPPVNVTTKKSP) are compositionally biased toward polar residues. A disordered region spans residues 887–908 (TGPSSPPVNVTTKKSPPSQPPA). N-linked (GlcNAc...) asparagine glycosylation is found at Asn895, Asn931, Asn956, and Asn957. Ser999 is lipidated: GPI-anchor amidated serine. A propeptide spans 1000-1028 (VGVQILKPSTQFLTMVGFFYCFVIQPLSR) (removed in mature form).

This sequence belongs to the immunoglobulin superfamily. Contactin family. In terms of assembly, interacts with PTPRG. As to expression, specifically expressed in neuronal cells. In brain, it is expressed in spinal cord, cerebrum and cerebellum. At 17 dpc, it is expressed in hippocampus, cerebellum, and the brain stem. Strongly expressed after birth with a maximum level between P1 and P21, which corresponds to the time frame of oligodendrogliogenesis.

It is found in the cell membrane. Its function is as follows. Contactins mediate cell surface interactions during nervous system development. Participates in oligodendrocytes generation by acting as a ligand of NOTCH1. Its association with NOTCH1 promotes NOTCH1 activation through the released notch intracellular domain (NICD) and subsequent translocation to the nucleus. May be involved in motor coordination. In Rattus norvegicus (Rat), this protein is Contactin-6 (Cntn6).